The chain runs to 308 residues: ATP synthase gamma chain (308 aa).

This sequence belongs to the ATPase gamma chain family. As to quaternary structure, F-type ATPases have 2 components, CF(1) - the catalytic core - and CF(0) - the membrane proton channel. CF(1) has five subunits: alpha(3), beta(3), gamma(1), delta(1), epsilon(1). CF(0) has three main subunits: a, b and c.

Its subcellular location is the cell membrane. Produces ATP from ADP in the presence of a proton gradient across the membrane. The gamma chain is believed to be important in regulating ATPase activity and the flow of protons through the CF(0) complex. This is ATP synthase gamma chain from Lacticaseibacillus paracasei (strain ATCC 334 / BCRC 17002 / CCUG 31169 / CIP 107868 / KCTC 3260 / NRRL B-441) (Lactobacillus paracasei).